The sequence spans 220 residues: PKHD-type hydroxylase sync_1544 (220 aa).

Residues 79 to 173 form the Fe2OG dioxygenase domain; that stretch reads KLHRFLISKT…RTVCVGWIES (95 aa). Residues His97, Asp99, and His154 each coordinate Fe cation. Arg164 lines the 2-oxoglutarate pocket.

Requires Fe(2+) as cofactor. It depends on L-ascorbate as a cofactor.

The polypeptide is PKHD-type hydroxylase sync_1544 (Synechococcus sp. (strain CC9311)).